We begin with the raw amino-acid sequence, 732 residues long: 1,4-alpha-glucan branching enzyme GlgB (732 aa).

Aspartate 415 (nucleophile) is an active-site residue. The Proton donor role is filled by glutamate 468.

It belongs to the glycosyl hydrolase 13 family. GlgB subfamily. In terms of assembly, monomer.

It catalyses the reaction Transfers a segment of a (1-&gt;4)-alpha-D-glucan chain to a primary hydroxy group in a similar glucan chain.. It functions in the pathway glycan biosynthesis; glycogen biosynthesis. In terms of biological role, catalyzes the formation of the alpha-1,6-glucosidic linkages in glycogen by scission of a 1,4-alpha-linked oligosaccharide from growing alpha-1,4-glucan chains and the subsequent attachment of the oligosaccharide to the alpha-1,6 position. The chain is 1,4-alpha-glucan branching enzyme GlgB from Nitrosomonas eutropha (strain DSM 101675 / C91 / Nm57).